The following is a 389-amino-acid chain: UDP-N-acetylglucosamine--N-acetylmuramyl-(pentapeptide) pyrophosphoryl-undecaprenol N-acetylglucosamine transferase (389 aa).

UDP-N-acetyl-alpha-D-glucosamine is bound by residues 17–19 (TAG), asparagine 137, arginine 179, serine 213, and glutamine 308.

This sequence belongs to the glycosyltransferase 28 family. MurG subfamily.

The protein localises to the cell membrane. It catalyses the reaction di-trans,octa-cis-undecaprenyl diphospho-N-acetyl-alpha-D-muramoyl-L-alanyl-D-glutamyl-meso-2,6-diaminopimeloyl-D-alanyl-D-alanine + UDP-N-acetyl-alpha-D-glucosamine = di-trans,octa-cis-undecaprenyl diphospho-[N-acetyl-alpha-D-glucosaminyl-(1-&gt;4)]-N-acetyl-alpha-D-muramoyl-L-alanyl-D-glutamyl-meso-2,6-diaminopimeloyl-D-alanyl-D-alanine + UDP + H(+). Its pathway is cell wall biogenesis; peptidoglycan biosynthesis. Its function is as follows. Cell wall formation. Catalyzes the transfer of a GlcNAc subunit on undecaprenyl-pyrophosphoryl-MurNAc-pentapeptide (lipid intermediate I) to form undecaprenyl-pyrophosphoryl-MurNAc-(pentapeptide)GlcNAc (lipid intermediate II). The chain is UDP-N-acetylglucosamine--N-acetylmuramyl-(pentapeptide) pyrophosphoryl-undecaprenol N-acetylglucosamine transferase from Rhodococcus erythropolis (strain PR4 / NBRC 100887).